The chain runs to 58 residues: Weak neurotoxin D2B (58 aa).

Cystine bridges form between C3/C24, C17/C41, and C43/C54.

As to expression, expressed by the venom gland.

It is found in the secreted. Functionally, binds to muscle nicotinic acetylcholine receptor (nAChR) and inhibit acetylcholine from binding to the receptor, thereby impairing neuromuscular transmission. The protein is Weak neurotoxin D2B of Micrurus pyrrhocryptus (Coral snake).